Reading from the N-terminus, the 152-residue chain is Ribosome maturation factor RimP (152 aa).

It belongs to the RimP family.

The protein localises to the cytoplasm. Required for maturation of 30S ribosomal subunits. The polypeptide is Ribosome maturation factor RimP (Erwinia tasmaniensis (strain DSM 17950 / CFBP 7177 / CIP 109463 / NCPPB 4357 / Et1/99)).